Reading from the N-terminus, the 417-residue chain is uncharacterized protein (417 aa).

Positions 1–21 are cleaved as a signal peptide; it reads MPYYWGAILIGGVFLAGCTQN.

This is an uncharacterized protein from Methanocaldococcus jannaschii (strain ATCC 43067 / DSM 2661 / JAL-1 / JCM 10045 / NBRC 100440) (Methanococcus jannaschii).